Consider the following 783-residue polypeptide: Serine/threonine-protein kinase SIK1 (783 aa).

The region spanning 27 to 278 (YDIERTLGKG…IAQIRQHRWM (252 aa)) is the Protein kinase domain. ATP contacts are provided by residues 33 to 41 (LGKGNFAVV) and Lys56. Asp149 functions as the Proton acceptor in the catalytic mechanism. Thr182 is subject to Phosphothreonine; by LKB1 and GSK3-beta. Ser186 is modified (phosphoserine; by autocatalysis). A UBA domain is found at 303–343 (DYDEQALGIMQTLGVDRQRTVESLQNSSYNHFAAIYYLLLE). Position 322 is a phosphothreonine; by CaMK1 (Thr322). Disordered stretches follow at residues 353–377 (CARP…VPQE) and 449–477 (RQGP…LAEV). Thr473 bears the Phosphothreonine; by PKA mark. Ser575 carries the post-translational modification Phosphoserine; by PKA. Positions 583 to 612 (LKAFRQQLRKTTRTKGFLGLNKIKGLARQV) are RK-rich region; required for cAMP responsiveness and nuclear localization. The tract at residues 619-643 (RASRGGLSPFHAPAQSPGLHGGAAG) is disordered.

This sequence belongs to the protein kinase superfamily. CAMK Ser/Thr protein kinase family. AMPK subfamily. Interacts with ATP1A1. Interacts (when phosphorylated on Thr-182 and Ser-186) with YWHAZ. Interacts (when phosphorylated at Thr-473 and/or Ser-575) with 14-3-3 proteins; the interaction inhibits kinase activity towards TORCs. There is a cooperative effect of the phosphorylation sites in 14-3-3 binding as the interaction is stronger when both Thr-473 and Ser-575 are modified. It depends on Mg(2+) as a cofactor. Phosphorylated at Thr-182 by STK11/LKB1 in complex with STE20-related adapter-alpha (STRADA) pseudo kinase and CAB39, leading to its activation. Phosphorylation at Thr-182 promotes autophosphorylation at Ser-186, which is required for sustained activity. Autophosphorylation at Ser-186 is maintained by sequential phosphorylation at Thr-182 by GSK3-beta. GSK3-beta cannot initiate phosphorylation at Thr-182, it can only maintain it. Phosphorylation at Ser-575 in response to cAMP signaling promotes translocation to the cytoplasm. Phosphorylation at Thr-322 by CaMK1 following intracellular sodium concentration leads to activation.

The protein resides in the cytoplasm. It localises to the nucleus. The enzyme catalyses L-seryl-[protein] + ATP = O-phospho-L-seryl-[protein] + ADP + H(+). The catalysed reaction is L-threonyl-[protein] + ATP = O-phospho-L-threonyl-[protein] + ADP + H(+). Its activity is regulated as follows. Activated by phosphorylation on Thr-182. Also activated by phosphorylation on Thr-322 in response to increases in intracellular sodium in parallel with elevations in intracellular calcium through the reversible sodium/calcium exchanger. Inhibited by phosphorylation at Thr-473 and Ser-575, probably by PKA, which triggers interaction with 14-3-3 proteins. Serine/threonine-protein kinase involved in various processes such as cell cycle regulation, gluconeogenesis and lipogenesis regulation, muscle growth and differentiation and tumor suppression. Phosphorylates HDAC4, HDAC5, PPME1, SREBF1, CRTC1/TORC1. Inhibits CREB activity by phosphorylating and inhibiting activity of TORCs, the CREB-specific coactivators, like CRTC2/TORC2 and CRTC3/TORC3 in response to cAMP signaling. Acts as a tumor suppressor and plays a key role in p53/TP53-dependent anoikis, a type of apoptosis triggered by cell detachment: required for phosphorylation of p53/TP53 in response to loss of adhesion and is able to suppress metastasis. Part of a sodium-sensing signaling network, probably by mediating phosphorylation of PPME1: following increases in intracellular sodium, SIK1 is activated by CaMK1 and phosphorylates PPME1 subunit of protein phosphatase 2A (PP2A), leading to dephosphorylation of sodium/potassium-transporting ATPase ATP1A1 and subsequent increase activity of ATP1A1. Acts as a regulator of muscle cells by phosphorylating and inhibiting class II histone deacetylases HDAC4 and HDAC5, leading to promote expression of MEF2 target genes in myocytes. Also required during cardiomyogenesis by regulating the exit of cardiomyoblasts from the cell cycle via down-regulation of CDKN1C/p57Kip2. Acts as a regulator of hepatic gluconeogenesis by phosphorylating and repressing the CREB-specific coactivators CRTC1/TORC1 and CRTC2/TORC2, leading to inhibit CREB activity. Also regulates hepatic lipogenesis by phosphorylating and inhibiting SREBF1. In concert with CRTC1/TORC1, regulates the light-induced entrainment of the circadian clock by attenuating PER1 induction; represses CREB-mediated transcription of PER1 by phosphorylating and deactivating CRTC1/TORC1. This Homo sapiens (Human) protein is Serine/threonine-protein kinase SIK1 (SIK1).